The primary structure comprises 297 residues: MAPSHAAHDSAATAHRIDGRAIARSLDERTAAAVRAIVARDGAPPGLAVVLVGNDPASEVYVGRKIEACRRVGILSFEHRLPAQTTQDALLTLIARLNADPTIHGILVQVPLPSHIDDGMVLSAIDPAKDVDGFHPVNVGRLSTGTGGLVPCTPLGVMMLLDSVIDDMKGMDAVVIGKSNIVGKPIAMLLLEREATVTVTHIETRGLPDIVRKADIIVAAAGAPRLVKGYWVKEGAVIIDVGITRLPGEGGKTRLVGDVAFDEVQHARAVTPVPGGVGPMTIACLLANTVKAAEMRG.

Residues 177 to 179, I202, and I243 contribute to the NADP(+) site; that span reads GKS.

This sequence belongs to the tetrahydrofolate dehydrogenase/cyclohydrolase family. Homodimer.

It carries out the reaction (6R)-5,10-methylene-5,6,7,8-tetrahydrofolate + NADP(+) = (6R)-5,10-methenyltetrahydrofolate + NADPH. It catalyses the reaction (6R)-5,10-methenyltetrahydrofolate + H2O = (6R)-10-formyltetrahydrofolate + H(+). It participates in one-carbon metabolism; tetrahydrofolate interconversion. Functionally, catalyzes the oxidation of 5,10-methylenetetrahydrofolate to 5,10-methenyltetrahydrofolate and then the hydrolysis of 5,10-methenyltetrahydrofolate to 10-formyltetrahydrofolate. The chain is Bifunctional protein FolD 2 from Rhizorhabdus wittichii (strain DSM 6014 / CCUG 31198 / JCM 15750 / NBRC 105917 / EY 4224 / RW1) (Sphingomonas wittichii).